The chain runs to 51 residues: Toxin CSTX-18 (51 aa).

Disulfide bonds link cysteine 9-cysteine 22, cysteine 14-cysteine 27, cysteine 21-cysteine 36, and cysteine 29-cysteine 34.

Contains 4 disulfide bonds. In terms of tissue distribution, expressed by the venom gland.

The protein resides in the secreted. The polypeptide is Toxin CSTX-18 (Cupiennius salei (American wandering spider)).